The chain runs to 159 residues: 16 kDa outer membrane lipoprotein (159 aa).

The N-terminal stretch at M1–S21 is a signal peptide. The N-palmitoyl cysteine moiety is linked to residue C22. A lipid anchor (S-diacylglycerol cysteine) is attached at C22.

The protein resides in the cell outer membrane. The polypeptide is 16 kDa outer membrane lipoprotein (smpA) (Brachyspira hyodysenteriae (Treponema hyodysenteriae)).